Consider the following 315-residue polypeptide: Shiga-like toxin 1 subunit A (315 aa).

Positions 1-22 (MKIIIFRVLTFFFVIFSVNVVA) are cleaved as a signal peptide. Residues 23–273 (KEFTLDFSTA…CHHHASRVAR (251 aa)) are A1. Residue Glu189 is part of the active site. An intrachain disulfide couples Cys264 to Cys283. The A2 stretch occupies residues 274-315 (MASDEFPSMCPADGRVRGITHNKILWDSSTLGAILMRRTISS).

The protein belongs to the ribosome-inactivating protein family. Shiga-like toxin contains a single subunit A and five copies of subunit B.

The protein resides in the secreted. It catalyses the reaction Endohydrolysis of the N-glycosidic bond at one specific adenosine on the 28S rRNA.. Its function is as follows. The A subunit is responsible for inhibiting protein synthesis through the catalytic inactivation of 60S ribosomal subunits. After endocytosis, the A subunit is cleaved by furin in two fragments, A1 and A2: A1 is the catalytically active fragment, and A2 is essential for holotoxin assembly with the B subunits. This Escherichia coli (Bacteriophage H19B) protein is Shiga-like toxin 1 subunit A (stxA).